Consider the following 704-residue polypeptide: DNA ligase (704 aa).

NAD(+) contacts are provided by residues 44–48, 93–94, and Glu-125; these read DYEYD and SI. The N6-AMP-lysine intermediate role is filled by Lys-127. Residues Arg-148, Glu-184, Lys-300, and Lys-324 each coordinate NAD(+). Zn(2+) is bound by residues Cys-418, Cys-421, Cys-436, and Cys-442. The BRCT domain occupies 625–704; it reads IISSNISGKI…DEWEHLINEK (80 aa).

Belongs to the NAD-dependent DNA ligase family. LigA subfamily. Requires Mg(2+) as cofactor. Mn(2+) is required as a cofactor.

The enzyme catalyses NAD(+) + (deoxyribonucleotide)n-3'-hydroxyl + 5'-phospho-(deoxyribonucleotide)m = (deoxyribonucleotide)n+m + AMP + beta-nicotinamide D-nucleotide.. DNA ligase that catalyzes the formation of phosphodiester linkages between 5'-phosphoryl and 3'-hydroxyl groups in double-stranded DNA using NAD as a coenzyme and as the energy source for the reaction. It is essential for DNA replication and repair of damaged DNA. In Pelobacter propionicus (strain DSM 2379 / NBRC 103807 / OttBd1), this protein is DNA ligase.